Here is a 363-residue protein sequence, read N- to C-terminus: Trichocyst matrix protein T4-B (363 aa).

An N-terminal signal peptide occupies residues 1–17 (MARSLTILAIVFAVATA). Residues 18–52 (RVTKSESPKEILAQVNKDSFGNSILSVLQLQLATG) constitute a propeptide that is removed on maturation. Positions 85 to 119 (VAFEKIIADLEQEIAYHQTQIVALSNLRDSTTEAL) form a coiled coil. Residues 190–221 (RFEKVQAKLMESKHALFKPLINALTQLASKVD) constitute a propeptide that is removed on maturation. Residues 244 to 352 (ASLLATEERQ…EVLTQKLSAA (109 aa)) adopt a coiled-coil conformation.

This sequence belongs to the TMP family. In terms of processing, two components are produced by post-translational processing from the precursor peptide.

The protein localises to the trichocyst. Its function is as follows. Structural protein that crystallize inside the trichocyst matrix. In Paramecium tetraurelia, this protein is Trichocyst matrix protein T4-B (T4B).